The sequence spans 517 residues: Zinc finger protein AEBP2 (517 aa).

Residues 1-229 are disordered; it reads MAAAITDMAD…DSEDSISSTI (229 aa). Ala2 is modified (N-acetylalanine). 2 positions are modified to phosphoserine: Ser18 and Ser24. The segment covering 36 to 51 has biased composition (acidic residues); that stretch reads PEEEEEEEEEEEEAEA. The segment covering 61–78 has biased composition (gly residues); it reads GGSGGGGGGGGGGVGGGE. Residues 94 to 121 show a composition bias toward acidic residues; sequence GEDEDEEEDDEEEEDESSSSGGGEEESS. Low complexity predominate over residues 122 to 150; it reads AESLVGSSGGSSSDETRSLSPGAASSSSG. At Ser141 the chain carries Phosphoserine. Residues 152–163 show a composition bias toward basic and acidic residues; that stretch reads GDGKEGLEEPKG. 2 stretches are compositionally biased toward gly residues: residues 166-175 and 185-196; these read GSQGGGGGGS and GDEGYGTGGGGS. Phosphoserine occurs at positions 206, 210, and 211. An interaction with RBBP4 region spans residues 209-294; it reads MSSDGEPLSR…IHVDGQRGGV (86 aa). The C2H2-type 1 zinc-finger motif lies at 261-286; the sequence is YNCCWDQCQACFNSSPDLADHIRSIH. A C2H2-type 2; degenerate zinc finger spans residues 300–322; it reads KGCKVYNTPSTSQSWLQRHMLTH. Residues 328–352 form a C2H2-type 3 zinc finger; the sequence is FKCVVGGCNASFASQGGLARHVPTH. Polar residues predominate over residues 352–365; it reads HFSQQNSSKVSSQP. The disordered stretch occupies residues 352-394; that stretch reads HFSQQNSSKVSSQPKAKEESPSKAGMNKRRKLKNKRRRSLPRP. Positions 377 to 392 are enriched in basic residues; that stretch reads MNKRRKLKNKRRRSLP. Ser390 carries the post-translational modification Phosphoserine. The interval 407–478 is interaction with SUZ12; the sequence is RHRAICFNLS…QLKTKVVHLS (72 aa). The important for nucleosome binding activity of the PRC2 complex stretch occupies residues 495–517; sequence TMPQKRLKRTLIRKVFNLYLSKQ.

The protein belongs to the AEBP2/jing C2H2-type zinc-finger family. As to quaternary structure, self-associates. Associates with the PRC2 complex, which consists of the core components EED, EZH1 or EZH2, SUZ12, and RBBP4, and various combinations of accessory subunits including AEBP2, JARID2, PHF19, MTF2 and EPOP. Found in a monomeric PRC2.2 (class 2) complex consisting of at least SUZ12, RBBP4, AEBP2 and JARID2. Within the PRC2 complex, interacts directly with SUZ12; competes with PHF19 for SUZ12 binding. Interacts with EED, EZH2, and RBBP4. May also interact with RBBP7.

It is found in the nucleus. Its function is as follows. Acts as an accessory subunit for the core Polycomb repressive complex 2 (PRC2), which mediates histone H3K27 (H3K27me3) trimethylation on chromatin leading to transcriptional repression of the affected target gene. Plays a role in nucleosome localization of the PRC2 complex. This Homo sapiens (Human) protein is Zinc finger protein AEBP2 (AEBP2).